A 155-amino-acid chain; its full sequence is Ubiquinone biosynthesis protein COQ4 homolog, mitochondrial (155 aa).

Belongs to the COQ4 family. In terms of assembly, component of a multi-subunit COQ enzyme complex. Requires Zn(2+) as cofactor.

Its subcellular location is the mitochondrion inner membrane. It catalyses the reaction a 4-hydroxy-3-methoxy-5-(all-trans-polyprenyl)benzoate + H(+) = a 2-methoxy-6-(all-trans-polyprenyl)phenol + CO2. The protein operates within cofactor biosynthesis; ubiquinone biosynthesis. In terms of biological role, lyase that catalyzes the C1-decarboxylation of 4-hydroxy-3-methoxy-5-(all-trans-polyprenyl)benzoic acid into 2-methoxy-6-(all-trans-polyprenyl)phenol during ubiquinone biosynthesis. This Cryptosporidium hominis protein is Ubiquinone biosynthesis protein COQ4 homolog, mitochondrial.